A 1244-amino-acid chain; its full sequence is Alpha-protein kinase 1 (1244 aa).

ADP-D-glycero-beta-D-manno-heptose contacts are provided by residues F61, Q67, R116, 150 to 153 (RQAR), D231, K233, 236 to 237 (ST), and F295. 4 disordered regions span residues 650–675 (LQEP…TPFS), 701–737 (VRNM…THPS), 757–798 (VKDR…TEDA), and 824–848 (NWPV…DPDA). Over residues 652–675 (EPNNDNLEPSQNQPQQQMPLTPFS) the composition is skewed to polar residues. Low complexity predominate over residues 713–726 (SRPSYRSASWSSDS). Positions 757–771 (VKDRQGKEQGEEISE) are enriched in basic and acidic residues. Over residues 787-798 (PEGETAESTEDA) the composition is skewed to acidic residues. In terms of domain architecture, Alpha-type protein kinase spans 1017 to 1237 (KYSKKSELWT…ICHRLSLTRP (221 aa)).

The protein belongs to the protein kinase superfamily. Alpha-type protein kinase family. ALPK subfamily. As to expression, highly expressed in liver. Expressed in the optic nerve and retinal pigmented epithelium. Lower expression is observed in the macula and extramacular retina.

It is found in the cytoplasm. Its subcellular location is the cytosol. The protein localises to the cytoskeleton. It localises to the spindle pole. The protein resides in the microtubule organizing center. It is found in the centrosome. Its subcellular location is the cell projection. The protein localises to the cilium. The enzyme catalyses L-seryl-[protein] + ATP = O-phospho-L-seryl-[protein] + ADP + H(+). The catalysed reaction is L-threonyl-[protein] + ATP = O-phospho-L-threonyl-[protein] + ADP + H(+). Serine/threonine-protein kinase activity is stimulated upon ADP-D-glycero-beta-D-manno-heptose (ADP-Heptose)-binding. Serine/threonine-protein kinase that detects bacterial pathogen-associated molecular pattern metabolites (PAMPs) and initiates an innate immune response, a critical step for pathogen elimination and engagement of adaptive immunity. Specifically recognizes and binds ADP-D-glycero-beta-D-manno-heptose (ADP-Heptose), a potent PAMP present in all Gram-negative and some Gram-positive bacteria. ADP-Heptose-binding stimulates its kinase activity to phosphorylate and activate TIFA, triggering pro-inflammatory NF-kappa-B signaling. May be involved in monosodium urate monohydrate (MSU)-induced inflammation by mediating phosphorylation of unconventional myosin MYO9A. May also play a role in apical protein transport by mediating phosphorylation of unconventional myosin MYO1A. May play a role in ciliogenesis. The protein is Alpha-protein kinase 1 of Homo sapiens (Human).